The following is a 333-amino-acid chain: Ribosomal RNA small subunit methyltransferase H (333 aa).

Residues 43–45 (GGH), D62, Y89, D110, and Q117 each bind S-adenosyl-L-methionine. Positions 312-333 (RLRAARRIRTTPTRPSPRRRRP) are disordered.

The protein belongs to the methyltransferase superfamily. RsmH family.

It localises to the cytoplasm. The enzyme catalyses cytidine(1402) in 16S rRNA + S-adenosyl-L-methionine = N(4)-methylcytidine(1402) in 16S rRNA + S-adenosyl-L-homocysteine + H(+). Its function is as follows. Specifically methylates the N4 position of cytidine in position 1402 (C1402) of 16S rRNA. This Beutenbergia cavernae (strain ATCC BAA-8 / DSM 12333 / CCUG 43141 / JCM 11478 / NBRC 16432 / NCIMB 13614 / HKI 0122) protein is Ribosomal RNA small subunit methyltransferase H.